The following is a 254-amino-acid chain: Zinc transporter GufA (254 aa).

The next 7 helical transmembrane spans lie at 4–24 (GLVASLLAGTATGLGALPVLV), 74–94 (VAAGVLLGGLFLRVWHDLMPH), 112–132 (ALLFVLAMTLHNFPEGLAVGV), 143–163 (LSVALGIGAQNIPEGLVVALA), 176–196 (FLALLTGMVEPVGALFGVLAL), 198–218 (LSSALLPWGLAFAGGAMLYVI), and 234–254 (EATTGLMWGFVLALVLDMSLG). Zn(2+) is bound by residues Asn-123, Glu-126, Gln-152, Asn-153, Glu-156, and Glu-185.

This sequence belongs to the ZIP transporter (TC 2.A.5) family. In terms of assembly, homodimer.

The protein localises to the cell inner membrane. Functionally, mediates the uptake of Zn(2+). In Myxococcus xanthus, this protein is Zinc transporter GufA (gufA).